We begin with the raw amino-acid sequence, 567 residues long: PHD finger protein 1 (567 aa).

A disordered region spans residues 1 to 31 (MAQPPRLSRSGASSLWDPASPAPTSGPRPRL). One can recognise a Tudor domain in the interval 29-86 (PRLWEGQDVLARWTDGLLYLGTIKKVDSAREVCLVQFEDDSQFLVLWKDISPAALPGE). PHD-type zinc fingers lie at residues 87–142 (ELLC…CVFA) and 186–240 (QSYC…CRGG). Disordered regions lie at residues 333–441 (ARMP…TDAR) and 455–537 (HPSA…GYLS). G360 bears the Phosphoserine mark. Residues 371–386 (PEPEPLRRRQKGKVEE) are compositionally biased toward basic and acidic residues. Phosphoserine is present on S420. Composition is skewed to low complexity over residues 423-433 (PNQSYQGSSGY), 456-470 (PSAS…SGPP), and 488-510 (SAPH…LPRR). Over residues 524 to 534 (GTGGGVRGGVG) the composition is skewed to gly residues.

The protein belongs to the Polycomblike family. As to quaternary structure, interacts with CHMP1. Associated component of the PRC2 complex. Interacts with p53/TP53. Highest levels in heart, skeletal muscle, and pancreas, lower levels in brain, placenta, lung, liver and kidney.

The protein resides in the nucleus. It is found in the cytoplasm. The protein localises to the cytoskeleton. It localises to the microtubule organizing center. Its subcellular location is the centrosome. Its function is as follows. Polycomb group (PcG) that specifically binds histone H3 trimethylated at 'Lys-36' (H3K36me3) and recruits the PRC2 complex. Involved in DNA damage response and is recruited at double-strand breaks (DSBs). Acts by binding to H3K36me3, a mark for transcriptional activation, and recruiting the PRC2 complex: it is however unclear whether recruitment of the PRC2 complex to H3K36me3 leads to enhance or inhibit H3K27me3 methylation mediated by the PRC2 complex. According to some reports, PRC2 recruitment by PHF1 promotes H3K27me3 and subsequent gene silencing by inducing spreading of PRC2 and H3K27me3 into H3K36me3 loci. According to another report, PHF1 recruits the PRC2 complex at double-strand breaks (DSBs) and inhibits the activity of PRC2. Regulates p53/TP53 stability and prolonges its turnover: may act by specifically binding to a methylated from of p53/TP53. The chain is PHD finger protein 1 (PHF1) from Homo sapiens (Human).